A 352-amino-acid polypeptide reads, in one-letter code: Anthranilate phosphoribosyltransferase (352 aa).

5-phospho-alpha-D-ribose 1-diphosphate contacts are provided by residues Gly-96, 99 to 100, Ser-104, 106 to 109, 124 to 132, and Ser-136; these read GS, NIST, and KHGNRSVSS. Gly-96 provides a ligand contact to anthranilate. Residue Ser-108 coordinates Mg(2+). Asn-127 is an anthranilate binding site. Arg-182 contributes to the anthranilate binding site. Asp-241 and Glu-242 together coordinate Mg(2+).

Belongs to the anthranilate phosphoribosyltransferase family. As to quaternary structure, homodimer. It depends on Mg(2+) as a cofactor.

It catalyses the reaction N-(5-phospho-beta-D-ribosyl)anthranilate + diphosphate = 5-phospho-alpha-D-ribose 1-diphosphate + anthranilate. The protein operates within amino-acid biosynthesis; L-tryptophan biosynthesis; L-tryptophan from chorismate: step 2/5. Functionally, catalyzes the transfer of the phosphoribosyl group of 5-phosphorylribose-1-pyrophosphate (PRPP) to anthranilate to yield N-(5'-phosphoribosyl)-anthranilate (PRA). The chain is Anthranilate phosphoribosyltransferase from Syntrophotalea carbinolica (strain DSM 2380 / NBRC 103641 / GraBd1) (Pelobacter carbinolicus).